The primary structure comprises 245 residues: Phycocyanobilin:ferredoxin oxidoreductase (245 aa).

Belongs to the HY2 family.

It carries out the reaction (2R,3Z)-phycocyanobilin + 4 oxidized [2Fe-2S]-[ferredoxin] = biliverdin IXalpha + 4 reduced [2Fe-2S]-[ferredoxin] + 4 H(+). In terms of biological role, catalyzes the four-electron reduction of biliverdin IX-alpha (2-electron reduction at both the A and D rings); the reaction proceeds via an isolatable 2-electron intermediate, 181,182-dihydrobiliverdin. Upon overexpression in E.coli with PCB:ferredoxin oxidoreductase, CpeS and either CpcB or PecB permits synthesis of phycocyanin-coupled CpcB or PecB. In Nostoc sp. (strain PCC 7120 / SAG 25.82 / UTEX 2576), this protein is Phycocyanobilin:ferredoxin oxidoreductase (pcyA).